The following is a 255-amino-acid chain: uncharacterized protein (255 aa).

Residues Ile13, Arg37, Asp55, Asn81, Tyr148, Lys152, Val180, and Thr182 each contribute to the NADP(+) site. Residue Tyr148 is the Proton donor of the active site. Lys152 functions as the Lowers pKa of active site Tyr in the catalytic mechanism.

Belongs to the short-chain dehydrogenases/reductases (SDR) family.

Functionally, involved in osmoadaptation. This is an uncharacterized protein from Emericella nidulans (strain FGSC A4 / ATCC 38163 / CBS 112.46 / NRRL 194 / M139) (Aspergillus nidulans).